The following is a 283-amino-acid chain: Glutamate racemase (283 aa).

Substrate-binding positions include 28–29 (DS) and 60–61 (YG). The active-site Proton donor/acceptor is the Cys92. 93 to 94 (NT) is a binding site for substrate. The active-site Proton donor/acceptor is the Cys204. 205 to 206 (TH) contributes to the substrate binding site.

Belongs to the aspartate/glutamate racemases family.

The catalysed reaction is L-glutamate = D-glutamate. It participates in cell wall biogenesis; peptidoglycan biosynthesis. Functionally, provides the (R)-glutamate required for cell wall biosynthesis. The chain is Glutamate racemase from Salmonella gallinarum (strain 287/91 / NCTC 13346).